The sequence spans 684 residues: Sec1 family domain-containing protein 2 (684 aa).

It belongs to the STXBP/unc-18/SEC1 family.

Functionally, may be involved in protein transport. This chain is Sec1 family domain-containing protein 2 (SCFD2), found in Homo sapiens (Human).